We begin with the raw amino-acid sequence, 142 residues long: Large ribosomal subunit protein uL11 (142 aa).

The protein belongs to the universal ribosomal protein uL11 family. Part of the ribosomal stalk of the 50S ribosomal subunit. Interacts with L10 and the large rRNA to form the base of the stalk. L10 forms an elongated spine to which L12 dimers bind in a sequential fashion forming a multimeric L10(L12)X complex. Post-translationally, one or more lysine residues are methylated.

In terms of biological role, forms part of the ribosomal stalk which helps the ribosome interact with GTP-bound translation factors. In Mesoplasma florum (strain ATCC 33453 / NBRC 100688 / NCTC 11704 / L1) (Acholeplasma florum), this protein is Large ribosomal subunit protein uL11.